Here is a 310-residue protein sequence, read N- to C-terminus: Malate dehydrogenase (310 aa).

NAD(+) contacts are provided by residues 7-13 (GAAGGIG) and Asp34. Residues Arg81 and Arg87 each coordinate substrate. Residues Asn94 and 117-119 (ITN) each bind NAD(+). Asn119 and Arg153 together coordinate substrate. Catalysis depends on His177, which acts as the Proton acceptor. Met227 contributes to the NAD(+) binding site.

It belongs to the LDH/MDH superfamily. MDH type 1 family. As to quaternary structure, homodimer.

It catalyses the reaction (S)-malate + NAD(+) = oxaloacetate + NADH + H(+). In terms of biological role, catalyzes the reversible oxidation of malate to oxaloacetate. This chain is Malate dehydrogenase, found in Idiomarina loihiensis (strain ATCC BAA-735 / DSM 15497 / L2-TR).